Consider the following 101-residue polypeptide: Small ribosomal subunit protein uS14 (101 aa).

This sequence belongs to the universal ribosomal protein uS14 family. As to quaternary structure, part of the 30S ribosomal subunit. Contacts proteins S3 and S10.

Binds 16S rRNA, required for the assembly of 30S particles and may also be responsible for determining the conformation of the 16S rRNA at the A site. In Shewanella woodyi (strain ATCC 51908 / MS32), this protein is Small ribosomal subunit protein uS14.